Reading from the N-terminus, the 363-residue chain is 3-isopropylmalate dehydrogenase A (363 aa).

Residue 78-89 participates in NAD(+) binding; that stretch reads GPKWGTGAVRPE. Residues Arg96, Arg106, Arg135, and Asp222 each contribute to the substrate site. Residues Asp222, Asp247, and Asp251 each contribute to the Mg(2+) site. 287–299 provides a ligand contact to NAD(+); that stretch reads GSAPDIAGKGIVN.

This sequence belongs to the isocitrate and isopropylmalate dehydrogenases family. In terms of assembly, homodimer. It depends on Mg(2+) as a cofactor. Mn(2+) is required as a cofactor.

The protein localises to the cytoplasm. The enzyme catalyses (2R,3S)-3-isopropylmalate + NAD(+) = 4-methyl-2-oxopentanoate + CO2 + NADH. Its pathway is amino-acid biosynthesis; L-leucine biosynthesis; L-leucine from 3-methyl-2-oxobutanoate: step 3/4. Its function is as follows. Catalyzes the oxidation of 3-carboxy-2-hydroxy-4-methylpentanoate (3-isopropylmalate) to 3-carboxy-4-methyl-2-oxopentanoate. The product decarboxylates to 4-methyl-2 oxopentanoate. The sequence is that of 3-isopropylmalate dehydrogenase A (leu2A) from Aspergillus niger.